Reading from the N-terminus, the 415-residue chain is Serine--tRNA ligase (415 aa).

231–233 (TAE) contacts L-serine. 262–264 (RSE) lines the ATP pocket. An L-serine-binding site is contributed by E285. 349 to 352 (EISS) lines the ATP pocket. Residue S383 participates in L-serine binding.

It belongs to the class-II aminoacyl-tRNA synthetase family. Type-1 seryl-tRNA synthetase subfamily. As to quaternary structure, homodimer. The tRNA molecule binds across the dimer.

The protein localises to the cytoplasm. It catalyses the reaction tRNA(Ser) + L-serine + ATP = L-seryl-tRNA(Ser) + AMP + diphosphate + H(+). The enzyme catalyses tRNA(Sec) + L-serine + ATP = L-seryl-tRNA(Sec) + AMP + diphosphate + H(+). It functions in the pathway aminoacyl-tRNA biosynthesis; selenocysteinyl-tRNA(Sec) biosynthesis; L-seryl-tRNA(Sec) from L-serine and tRNA(Sec): step 1/1. Functionally, catalyzes the attachment of serine to tRNA(Ser). Is also able to aminoacylate tRNA(Sec) with serine, to form the misacylated tRNA L-seryl-tRNA(Sec), which will be further converted into selenocysteinyl-tRNA(Sec). The protein is Serine--tRNA ligase of Helicobacter pylori (strain G27).